Consider the following 199-residue polypeptide: Molybdenum cofactor guanylyltransferase (199 aa).

Residues 12–14, lysine 25, asparagine 53, aspartate 71, and aspartate 101 contribute to the GTP site; that span reads LAG. Position 101 (aspartate 101) interacts with Mg(2+).

It belongs to the MobA family. As to quaternary structure, monomer. Mg(2+) is required as a cofactor.

The protein resides in the cytoplasm. The catalysed reaction is Mo-molybdopterin + GTP + H(+) = Mo-molybdopterin guanine dinucleotide + diphosphate. Its function is as follows. Transfers a GMP moiety from GTP to Mo-molybdopterin (Mo-MPT) cofactor (Moco or molybdenum cofactor) to form Mo-molybdopterin guanine dinucleotide (Mo-MGD) cofactor. The sequence is that of Molybdenum cofactor guanylyltransferase from Cupriavidus pinatubonensis (strain JMP 134 / LMG 1197) (Cupriavidus necator (strain JMP 134)).